Consider the following 362-residue polypeptide: MLKVGSSLLAADGGGLSPRFALGLAQFVSANLAAGRELVIVSSGAVAAGRAILPKAADVGAPIAARQALAALGQAQLIALWQRFFERPVAQVLLTHDDLRNRRRYLNARATLGELLRLGALPVINENDTVSVDELKLGDNDNLAAIVAALVDADALFIATDIDGLYSADPRSNPLARPLDDVPELTPEVLAMAGGSGSNVGTGGMRTKLEAAAKAGAAGIETYLFNGRSGEVVRALAQDRLRGTRIHAARARIAARKYWLRHAPVEAGAILIDDGAAAALTGKGASLLPGGVAGAQGDFRRGDMVEIRLRDTAGDQCLARGVSQYSALDIRRIAGRHSREIENVLGYSYGENVVHRDDLVVL.

Lys3 is a binding site for ATP. Residues Ser43, Asp128, and Asn140 each contribute to the substrate site. ATP contacts are provided by residues Thr160–Asp161 and Thr202–Lys208. Residues Ala267–Ser348 enclose the PUA domain.

Belongs to the glutamate 5-kinase family.

It is found in the cytoplasm. The enzyme catalyses L-glutamate + ATP = L-glutamyl 5-phosphate + ADP. It participates in amino-acid biosynthesis; L-proline biosynthesis; L-glutamate 5-semialdehyde from L-glutamate: step 1/2. Catalyzes the transfer of a phosphate group to glutamate to form L-glutamate 5-phosphate. This chain is Glutamate 5-kinase, found in Xanthomonas euvesicatoria pv. vesicatoria (strain 85-10) (Xanthomonas campestris pv. vesicatoria).